Reading from the N-terminus, the 544-residue chain is Chromatin assembly factor 1 subunit A (544 aa).

The segment covering 1 to 22 (MNSESVDSDVAASTSNKGNELC) has biased composition (polar residues). Disordered stretches follow at residues 1–52 (MNSE…EADE), 67–117 (IYNG…REQE), and 138–160 (QEQQ…AQRL). The span at 23–35 (SSSTDITSLSVSS) shows a compositional bias: low complexity. Over residues 36-47 (PNESVIHSSHSA) the composition is skewed to polar residues. Residues 56–170 (KLSYEGNRKK…RQEQILNKER (115 aa)) form an interaction with DNA and pcn1/PCNA region. The span at 74–117 (AGKEKKLQKQRAQEERIRQKEAERLKREKERQQREQEKKLREQE) shows a compositional bias: basic and acidic residues. A coiled-coil region spans residues 76–176 (KEKKLQKQRA…NKERQQLKLN (101 aa)). The PCNA-interaction protein (PIP box) motif lies at 172–179 (QLKLNNFF). The interval 325–396 (SNVLLNPWLE…DKDSVNASNT (72 aa)) is interaction with histones H3/H4. Over residues 351-388 (DEEDDGEDLESEDEEVDNSDDIVEDGDNAFVDDEDDDK) the composition is skewed to acidic residues. Residues 351–400 (DEEDDGEDLESEDEEVDNSDDIVEDGDNAFVDDEDDDKDSVNASNTHRSS) form a disordered region.

It belongs to the RLF2 family. As to quaternary structure, component of chromatin assembly factor 1 (CAF-1), composed of pcf1, pcf2 and pcf3. Interacts (via PIP motif) with pcn1/PCNA; the interaction is direct and occurs during S-phase. Interacts with swi6 at the G1/S-phase transition and early S-phase, but not in the G2 phase. The CAF-1 complex interacts with histone H3/H4 dimers.

The protein localises to the nucleus. In terms of biological role, acts as a component of the histone chaperone complex chromatin assembly factor 1 (CAF-1), which assembles histone octamers onto DNA during replication and repair. CAF-1 performs the first step of the nucleosome assembly process, bringing newly synthesized histones H3 and H4 to replicating DNA; histones H2A/H2B can bind to this chromatin precursor subsequent to DNA replication to complete the histone octamer. Plays a role in the maintenance of heterochromatin. The protein is Chromatin assembly factor 1 subunit A of Schizosaccharomyces pombe (strain 972 / ATCC 24843) (Fission yeast).